The sequence spans 349 residues: Isopentenyl-diphosphate delta-isomerase (349 aa).

Substrate is bound at residue 12–13 (RK). Residues 69 to 71 (GMT), Ser99, and Asn128 each bind FMN. Gln158 contributes to the substrate binding site. Position 159 (Glu159) interacts with Mg(2+). FMN-binding positions include Lys189, Ser214, Thr219, 265 to 267 (GIR), and 286 to 287 (SG).

This sequence belongs to the IPP isomerase type 2 family. Homooctamer. Dimer of tetramers. Requires FMN as cofactor. NADPH serves as cofactor. The cofactor is Mg(2+).

Its subcellular location is the cytoplasm. The enzyme catalyses isopentenyl diphosphate = dimethylallyl diphosphate. Its function is as follows. Involved in the biosynthesis of isoprenoids. Catalyzes the 1,3-allylic rearrangement of the homoallylic substrate isopentenyl (IPP) to its allylic isomer, dimethylallyl diphosphate (DMAPP). This Latilactobacillus sakei subsp. sakei (strain 23K) (Lactobacillus sakei subsp. sakei) protein is Isopentenyl-diphosphate delta-isomerase.